The following is a 465-amino-acid chain: Lactaldehyde dehydrogenase (465 aa).

220 to 225 (GSVEVG) is an NAD(+) binding site. Active-site residues include glutamate 240 and cysteine 274.

This sequence belongs to the aldehyde dehydrogenase family. In terms of assembly, homotetramer.

The catalysed reaction is (S)-lactaldehyde + NAD(+) + H2O = (S)-lactate + NADH + 2 H(+). Its pathway is cofactor biosynthesis; coenzyme F420 biosynthesis. Involved in F420 biosynthesis through the oxidation of lactaldehyde to lactate. In Methanococcus maripaludis (strain DSM 14266 / JCM 13030 / NBRC 101832 / S2 / LL), this protein is Lactaldehyde dehydrogenase.